We begin with the raw amino-acid sequence, 233 residues long: Large ribosomal subunit protein mL67 (233 aa).

The disordered stretch occupies residues 214 to 233 (RQQAQQSEQQSQSELESQTA). Positions 215-233 (QQAQQSEQQSQSELESQTA) are enriched in low complexity.

Belongs to the mitochondrion-specific ribosomal protein mL67 family.

It is found in the nucleus. The protein localises to the mitochondrion. Its function is as follows. Transcription factor involved in regulation of RNA polymerase II-dependent transcription. Also involved in regulation of mitochondrial DNA recombination, maintenance and repair, and generation of homoplasmic cells. The polypeptide is Large ribosomal subunit protein mL67 (MHR1) (Debaryomyces hansenii (strain ATCC 36239 / CBS 767 / BCRC 21394 / JCM 1990 / NBRC 0083 / IGC 2968) (Yeast)).